The primary structure comprises 167 residues: MHPILEAFWYILPAYFANSSPVILGGGTPIDFGKTWRDGRRIFGDSKTWRGFLGGLTVGTLIGVIQQIIYPYYPSLSLAFKVSFLLALGALVGDLIGSFIKRRLNLPPGYPAVGLDQWGFLISALCFAYPVHTIPTGEVLLLLVVTPLIHWGTNVLAYKMKWKSVPW.

Helical transmembrane passes span 4-24 (ILEA…PVIL), 51-71 (GFLG…IIYP), 80-100 (FKVS…GSFI), 104-124 (LNLP…LISA), and 139-158 (VLLL…VLAY).

It belongs to the CDP-archaeol synthase family. The cofactor is Mg(2+).

Its subcellular location is the cell membrane. It catalyses the reaction 2,3-bis-O-(geranylgeranyl)-sn-glycerol 1-phosphate + CTP + H(+) = CDP-2,3-bis-O-(geranylgeranyl)-sn-glycerol + diphosphate. Its pathway is membrane lipid metabolism; glycerophospholipid metabolism. In terms of biological role, catalyzes the formation of CDP-2,3-bis-(O-geranylgeranyl)-sn-glycerol (CDP-archaeol) from 2,3-bis-(O-geranylgeranyl)-sn-glycerol 1-phosphate (DGGGP) and CTP. This reaction is the third ether-bond-formation step in the biosynthesis of archaeal membrane lipids. This is CDP-archaeol synthase from Pyrococcus furiosus (strain ATCC 43587 / DSM 3638 / JCM 8422 / Vc1).